A 376-amino-acid polypeptide reads, in one-letter code: Mitogen-activated protein kinase 4 (376 aa).

The 287-residue stretch at 43 to 329 (VPPLRPIGRG…VDEALCHPYL (287 aa)) folds into the Protein kinase domain. ATP-binding positions include 49–57 (IGRGAYGIV) and Lys72. The Proton acceptor role is filled by Asp169. Thr201 carries the phosphothreonine modification. Positions 201-203 (TEY) match the TXY motif. Position 203 is a phosphotyrosine (Tyr203).

Belongs to the protein kinase superfamily. CMGC Ser/Thr protein kinase family. MAP kinase subfamily. Interacts with MEKK1, MKK1, MKK2 and MKK6. May form a ternary complex composed of MEKK1 and MKK1/MKK2 and MPK4. Interacts with MKS1 and AP2C1. May form a ternary or larger complex with MKS1 and WRKY25 and/or WRKY33. Interacts with MAP65-1. No interactions with RACK1A, RACK1B or RACK1C. Interacts directly with ASR3 and mediates its phosphorylation. Binds to MEKK2. Interacts with PAT1. Binds to HT1. Dually phosphorylated on Thr-201 and Tyr-203, which activates the enzyme. Autophosphorylated on serine and tyrosine residues. Dephosphorylated by DSPTP1. Phosphorylated by MKK6 in vitro. In terms of tissue distribution, ubiquitous. Expressed in the veins and stomatal guard cells of leaf plates, petioles, stem, roots and flowers.

The protein localises to the cytoplasm. It localises to the nucleus. The protein resides in the cytoskeleton. The enzyme catalyses L-seryl-[protein] + ATP = O-phospho-L-seryl-[protein] + ADP + H(+). It carries out the reaction L-threonyl-[protein] + ATP = O-phospho-L-threonyl-[protein] + ADP + H(+). Activated by threonine and tyrosine phosphorylation. Activated by the MAP kinase kinases MKK1 and MKK2. Activated in response to touch, wounding, low temperature, low humidity, salt stress and the bacterial elicitors flagellin and harpin. Activated upon Pseudomonas syringae pv. tomato DC3000 infection. Repressed by the protein phosphatase 2C AP2C1. Repressed by DSPTP1-mediated dephosphorylation. Activated by the MAP kinase kinase MKK6 in vitro. In terms of biological role, the ANPs-MKK6-MPK4 module is involved in the regulation of plant cytokinesis during meiosis and mitosis. Essential to promote the progression of cytokinesis and for cellularization (formation of the cell plate) during male-specific meiosis. Involved in cortical microtubules organization and stabilization by regulating the phosphorylation state of microtubule-associated proteins such as MAP65-1. Involved in root hair development process. Negative regulator of systemic acquired resistance (SAR) and salicylic acid- (SA) mediated defense response. Required for jasmonic acid- (JA) mediated defense gene expression. May regulate activity of transcription factor controlling pathogenesis-related (PR) gene expression. Seems to act independently of the SAR regulatory protein NPR1 (Nonexpresser of PR1). Phosphorylates MKS1 and transcription factors WRKY25 and WRKY33. The MEKK1, MKK1/MKK2 and MPK4 function in a signaling pathway that modulates the expression of genes responding to biotic and abiotic stresses and also plays an important role in pathogen defense by negatively regulating innate immunity. Phosphorylates MEKK2 upon treatment with flg22. Involved in stomatal movement regulation by repressing HT1 and HT1-mediated GHR1 phosphorylation. In Arabidopsis thaliana (Mouse-ear cress), this protein is Mitogen-activated protein kinase 4.